The chain runs to 1098 residues: Mediator of RNA polymerase II transcription subunit 5 (1098 aa).

The tract at residues 1019-1041 (PDDVQKSADMKPDTGIKEDDSEK) is disordered. The span at 1021 to 1041 (DVQKSADMKPDTGIKEDDSEK) shows a compositional bias: basic and acidic residues.

It belongs to the Mediator complex subunit 5 family. In terms of assembly, component of the Mediator complex.

It localises to the nucleus. Functionally, component of the Mediator complex, a coactivator involved in the regulated transcription of nearly all RNA polymerase II-dependent genes. Mediator functions as a bridge to convey information from gene-specific regulatory proteins to the basal RNA polymerase II transcription machinery. Mediator is recruited to promoters by direct interactions with regulatory proteins and serves as a scaffold for the assembly of a functional preinitiation complex with RNA polymerase II and the general transcription factors. The sequence is that of Mediator of RNA polymerase II transcription subunit 5 (NUT1) from Eremothecium gossypii (strain ATCC 10895 / CBS 109.51 / FGSC 9923 / NRRL Y-1056) (Yeast).